Reading from the N-terminus, the 256-residue chain is Homeobox protein ceh-34 (256 aa).

A DNA-binding region (homeobox) is located at residues 134–193; the sequence is GEETNYCFKSKSRNVLRDAYKKCQYPSVEDKRRLAQQTELSIIQVSNWFKNKRQRERAAG. The interval 187–233 is disordered; that stretch reads QRERAAGQLDRSSARSNDSDDGSSGCESKPPMNIDSPAPPPLPTSFD.

It belongs to the SIX/Sine oculis homeobox family. As to quaternary structure, interacts (via N-terminus) with eya-1 (via C-terminus). As to expression, shows expression only in the pharyngeal nervous system.

The protein localises to the nucleus. Its function is as follows. Acts as a transcription regulator. Binds to the sequence motif 5'-TCAGGTT-3'. Binds to the cis-regulatory element of proapoptotic factor egl-1 gene and together with eya-1 activates egl-1 expression to promote motor neuron M4 sister cell apoptosis. Also promotes apoptosis of I1 pharyngeal neuron sister cell. Together with eya-1, required to specify the coelomocyte fate in embryonic and postembryonic precursors. Required to establish and maintain the differentiation of all 14 classes of pharyngeal neurons. Controls the neurotransmitter signaling capacity of the neurons and is required for the expression of some neurotransmitter receptors including mgl-1, glr-2 and ser-7. Affects the neuropeptidergic identity of pharyngeal neurons. Required for the pharyngeal expression of sensory receptors gur-3, glu-7 and str-97, antimicrobial defense genes such as spp-12, gpla-1/flr-2 and htrl-1, and pan-pharyngeal nervous system genes such as kin-36. Required to establish and maintain pharyngeal nervous system architecture by ensuring correct axon and synapse organization. Required for expression of eya-1 which may act as a transcriptional cofactor to specify distinct pharyngeal neuron types. Cooperates with several homeobox proteins to specify distinct pharyngeal neuron types including unc-86 in the NSM and I1 neurons, ceh-14 in the I2 neuron, ceh-2 and pros-1 in the I3 neuron, ceh-45 in the M1 neuron, ceh-2 in the M3 neuron, ceh-28 and zag-1 in the M4 neuron, and vab-15 in the M5 neuron. The sequence is that of Homeobox protein ceh-34 (ceh-34) from Caenorhabditis elegans.